Consider the following 51-residue polypeptide: CQQPVKPGLCEAYIPRFFYNTSSKQCEKFIYGGCGGNSNRFLTMKACQDKC.

3 cysteine pairs are disulfide-bonded: C1/C51, C10/C34, and C26/C47.

This sequence belongs to the venom Kunitz-type family. Sea anemone type 2 potassium channel toxin subfamily.

It is found in the secreted. Its subcellular location is the nematocyst. Functionally, potent toxin and weak serine protease inhibitor that displays activity on both trypsin and elastase. May act as a neurotoxin by blocking voltage-gated potassium channels (Kv1.1/KCNA1 and Kv1.2/KCNA2). Has a neuroprotective effect, since it suppress, at low concentration, the 6-hydroxydopamine-induced neurotoxicity on the locomotive behavior of zebrafish. In vivo, has strong reversible antilocomotor activity. In addition, it is lethal to zebrafish larvae at high doses. This chain is Kunitz-like toxin PcKuz3, found in Palythoa caribaeorum (White encrusting zoanthid coral).